A 144-amino-acid chain; its full sequence is Maximins 6/Hv (144 aa).

The first 18 residues, 1–18 (MNFKYIVAVSFLIASGYA), serve as a signal peptide directing secretion. Residues 19–43 (RSEENDVQSLSQREVLEEETLREIR) constitute a propeptide that is removed on maturation. An Asparagine amide modification is found at asparagine 70. A propeptide spanning residues 74–123 (TAKGHEVMKRLEAVMRDLDSLDHPEEASERETRGFNQEEIANLFTKKEKR) is cleaved from the precursor. An Isoleucine amide modification is found at isoleucine 143.

It belongs to the bombinin family. In terms of tissue distribution, expressed by the skin glands.

Its subcellular location is the secreted. Functionally, shows antimicrobial activity against bacteria and against the fungus C.albicans. It has little hemolytic activity. Shows antimicrobial activity against bacteria and against the fungus C.albicans. Shows strong hemolytic activity. In Bombina maxima (Giant fire-bellied toad), this protein is Maximins 6/Hv.